The sequence spans 432 residues: Gamma-glutamyl phosphate reductase (432 aa).

The protein belongs to the gamma-glutamyl phosphate reductase family.

It localises to the cytoplasm. It catalyses the reaction L-glutamate 5-semialdehyde + phosphate + NADP(+) = L-glutamyl 5-phosphate + NADPH + H(+). The protein operates within amino-acid biosynthesis; L-proline biosynthesis; L-glutamate 5-semialdehyde from L-glutamate: step 2/2. In terms of biological role, catalyzes the NADPH-dependent reduction of L-glutamate 5-phosphate into L-glutamate 5-semialdehyde and phosphate. The product spontaneously undergoes cyclization to form 1-pyrroline-5-carboxylate. The chain is Gamma-glutamyl phosphate reductase from Methylorubrum extorquens (strain CM4 / NCIMB 13688) (Methylobacterium extorquens).